The primary structure comprises 154 residues: dCTP deaminase (154 aa).

DCTP contacts are provided by residues 79–84 (RSSLAR), D95, Q124, and Y138.

Belongs to the dCTP deaminase family. In terms of assembly, homotrimer.

The enzyme catalyses dCTP + H2O + H(+) = dUTP + NH4(+). Its pathway is pyrimidine metabolism; dUMP biosynthesis; dUMP from dCTP (dUTP route): step 1/2. Its function is as follows. Catalyzes the deamination of dCTP to dUTP. This chain is dCTP deaminase, found in Pyrococcus abyssi (strain GE5 / Orsay).